The following is a 229-amino-acid chain: Large ribosomal subunit protein uL1 (229 aa).

The protein belongs to the universal ribosomal protein uL1 family. As to quaternary structure, part of the 50S ribosomal subunit.

Binds directly to 23S rRNA. The L1 stalk is quite mobile in the ribosome, and is involved in E site tRNA release. Functionally, protein L1 is also a translational repressor protein, it controls the translation of the L11 operon by binding to its mRNA. The sequence is that of Large ribosomal subunit protein uL1 from Streptococcus pneumoniae (strain ATCC 700669 / Spain 23F-1).